The sequence spans 22 residues: NDMA-dependent alcohol dehydrogenase (22 aa).

Belongs to the zinc-containing alcohol dehydrogenase family. Homotetramer. NADH is required as a cofactor.

It is found in the cytoplasm. The catalysed reaction is N,N-dimethyl-4-nitrosoaniline + a primary alcohol = 4-(hydroxylamino)-N,N-dimethylaniline + an aldehyde. The enzyme catalyses ethanol + A = acetaldehyde + AH2. Its function is as follows. This is a novel enzyme, catalytically different from common alcohol dehydrogenases. It is effective in oxidizing ethanol, other primary alcohols and benzylalcohol only in the presence of p-nitroso-N,N-dimethylaniline (NDMA) as an electron acceptor. NADH acts as a cofactor here instead of as a coenzyme. This is NDMA-dependent alcohol dehydrogenase from Rhodococcus erythropolis (Arthrobacter picolinophilus).